The primary structure comprises 133 residues: Fluoride-specific ion channel FluC (133 aa).

4 helical membrane passes run 12–32 (LAMT…ASLI), 41–61 (WGTL…LVWL), 76–96 (IVGV…CLVF), and 104–124 (MIGI…FAGA). Residues Gly-81 and Thr-84 each coordinate Na(+).

The protein belongs to the fluoride channel Fluc/FEX (TC 1.A.43) family.

The protein resides in the cell inner membrane. The enzyme catalyses fluoride(in) = fluoride(out). With respect to regulation, na(+) is not transported, but it plays an essential structural role and its presence is essential for fluoride channel function. Its function is as follows. Fluoride-specific ion channel. Important for reducing fluoride concentration in the cell, thus reducing its toxicity. This Xanthomonas axonopodis pv. citri (strain 306) protein is Fluoride-specific ion channel FluC.